A 764-amino-acid chain; its full sequence is Probable cyclic nucleotide-gated ion channel 20, chloroplastic (764 aa).

The N-terminal 25 residues, 1–25, are a transit peptide targeting the chloroplast; sequence MASHNENDDIPMLPISDPSSRTRAR. The interval 1–40 is disordered; that stretch reads MASHNENDDIPMLPISDPSSRTRARAFTSRSRSVSLSNPT. Residues 19-33 show a composition bias toward low complexity; sequence SSRTRARAFTSRSRS. Residues 26 to 204 lie on the Stromal side of the membrane; that stretch reads AFTSRSRSVS…PHAKEVQTWT (179 aa). The chain crosses the membrane as a helical span at residues 205-225; sequence KFFALSCLLAIFIDPLFFFLI. The Lumenal segment spans residues 226 to 242; it reads KVQEQNKCIMIDWPMTK. A helical transmembrane segment spans residues 243–263; that stretch reads AFVAVRSVTDVIFTMNILLQF. Topologically, residues 264–295 are stromal; that stretch reads RLAYVARESTVVGAGQLVSHPKKIALHYLKGK. A helical transmembrane segment spans residues 296 to 316; sequence FFLDLFIVMPLPQILILWIIP. The Lumenal portion of the chain corresponds to 317-329; the sequence is AHLGASGANYAKN. The chain crosses the membrane as a helical span at residues 330–350; sequence LLRAAVLFQYIPKLYRLLPFL. The Stromal segment spans residues 351 to 366; sequence AGQTPTGFIFESAWAN. Residues 367–387 traverse the membrane as a helical segment; the sequence is FVINLLTFMLAGHVVGSCWYL. At 388–488 the chain is on the lumenal side; sequence FGLQRVNQCL…GNQVPSYFLG (101 aa). The chain crosses the membrane as a helical span at residues 489-509; it reads EVFFTMGIIGLGLLLFALLIG. Topologically, residues 510–764 are stromal; sequence NMQNFLQALG…LCTPQSSYSL (255 aa). A nucleoside 3',5'-cyclic phosphate contacts are provided by residues 593–710 and Glu658; that span reads IFSL…EDVT. The segment at 713 to 729 is calmodulin-binding; that stretch reads FSRFLRSHRVQGAIRYD. The 30-residue stretch at 734–763 folds into the IQ domain; it reads RLRAARQIQVAWRYRRRRLHRLCTPQSSYS.

Belongs to the cyclic nucleotide-gated cation channel (TC 1.A.1.5) family. Homotetramer or heterotetramer.

The protein resides in the plastid. The protein localises to the chloroplast thylakoid membrane. Functionally, probable cyclic nucleotide-gated ion channel. This Arabidopsis thaliana (Mouse-ear cress) protein is Probable cyclic nucleotide-gated ion channel 20, chloroplastic (CNGC20).